The sequence spans 309 residues: MRLEQLQAALRVAETGSFQEAAQKVGCNQSTISRQVKGLEDELGIALFRRQGRMKLTAAGERLLPRLRRICQEWQTACTEIEELLTGRQTELCMAIADSIGGCYLPAVLNRFQQQWPSIHLRVSTLGSDRALKVLRDGLIDLAIVMDSPTLTTSAGLVVDLLLEEEVQVLLSVDHPLADQKAIAWEQLSHVPQVVFKDGYGMQRLVEQRFRELGLELNSCLELNSLDSFRGVVREGYWLALLPQAALVDARHDPRLVIRPTAEPRLTRRIKLVIPEEQLSLPPVRHFRQLCREAMTAELCDFKTLSQLF.

In terms of domain architecture, HTH lysR-type spans 1 to 57; the sequence is MRLEQLQAALRVAETGSFQEAAQKVGCNQSTISRQVKGLEDELGIALFRRQGRMKLT. Residues 18–37 constitute a DNA-binding region (H-T-H motif); it reads FQEAAQKVGCNQSTISRQVK.

It belongs to the LysR transcriptional regulatory family.

In terms of biological role, seems to regulate utilization of fixed nitrogen by controlling the expression of a certain gene(s) involved in nitrogen metabolism. The sequence is that of Probable nitrogen assimilation transcriptional activator (ntcB) from Synechococcus elongatus (strain ATCC 33912 / PCC 7942 / FACHB-805) (Anacystis nidulans R2).